A 545-amino-acid chain; its full sequence is RNA-directed RNA polymerase beta chain (545 aa).

Residues 243-373 (RLAQQGSRDG…PNLRKTFTSG (131 aa)) enclose the RdRp catalytic domain.

In terms of assembly, part of the viral RNA-dependent RNA polymerase complex, the other subunits are probably the host ribosomal protein S1, EF-Tu and EF-Ts.

The catalysed reaction is RNA(n) + a ribonucleoside 5'-triphosphate = RNA(n+1) + diphosphate. Functionally, this is the catalytic subunit of the viral RNA-dependent RNA polymerase complex. This complex is involved in viral RNA replication that produces (+)-stranded genomes via a complementary, (-)-stranded intermediate. This Enterobacteria phage fr (Bacteriophage fr) protein is RNA-directed RNA polymerase beta chain.